The following is a 79-amino-acid chain: RNA-binding protein Hfq (79 aa).

A Sm domain is found at 10-69; the sequence is DPFLNALRKEHVPVSIYLVNGIKLQGNIESFDQYVVLLRNTVTQMVYKHAISTVVPARPV.

The protein belongs to the Hfq family. Homohexamer.

Functionally, RNA chaperone that binds small regulatory RNA (sRNAs) and mRNAs to facilitate mRNA translational regulation in response to envelope stress, environmental stress and changes in metabolite concentrations. Also binds with high specificity to tRNAs. The polypeptide is RNA-binding protein Hfq (Burkholderia cenocepacia (strain HI2424)).